The primary structure comprises 775 residues: Armadillo-like helical domain-containing protein 4 (775 aa).

Residues M1–A47 form the signal peptide. At F48–M715 the chain is on the extracellular side. Residue N76 is glycosylated (N-linked (GlcNAc...) asparagine). 3 disordered regions span residues A120–S148, V247–S273, and K324–T366. The segment covering G129–E142 has biased composition (polar residues). Positions K324–E335 are enriched in basic and acidic residues. N476 carries N-linked (GlcNAc...) asparagine glycosylation. The disordered stretch occupies residues I559–I669. Over residues T577 to A599 the composition is skewed to polar residues. The segment covering L606 to E640 has biased composition (acidic residues). Residues L716–I736 form a helical membrane-spanning segment. Over K737–F775 the chain is Cytoplasmic. Phosphoserine occurs at positions 770 and 771.

In terms of assembly, interacts with IL6ST; this interaction prevents IL6ST protein homodimerization and bridges ARMH4 with IL6R and STAT3 and therefore inhibits phosphorylation of STAT3 at 'Tyr-705'. Interacts (via cytoplasmic tail) with RICTOR; this interaction bridges ARMH4 to the mTORC2 complex and inhibits the mTORC2 kinase activity. As to expression, expressed in bone-marroew cells.

It localises to the membrane. Functionally, may modulate immune response and may play a role in inflammation. Down-modulates STAT3 signaling throught direct interaction with IL6ST, resulting in the inhibition of phosphorylation of STAT3 at 'Tyr-705'. May negatively regulates AKT signaling by modulating the activity of mTORC2 complex through RICTOR interaction. The sequence is that of Armadillo-like helical domain-containing protein 4 from Mus musculus (Mouse).